Consider the following 509-residue polypeptide: Probable malate:quinone oxidoreductase (509 aa).

The disordered stretch occupies residues 490 to 509; sequence LGLNEKEPVSGASEKELVYS. The span at 493 to 509 shows a compositional bias: basic and acidic residues; it reads NEKEPVSGASEKELVYS.

It belongs to the MQO family. It depends on FAD as a cofactor.

It catalyses the reaction (S)-malate + a quinone = a quinol + oxaloacetate. It participates in carbohydrate metabolism; tricarboxylic acid cycle; oxaloacetate from (S)-malate (quinone route): step 1/1. The chain is Probable malate:quinone oxidoreductase from Geobacillus sp. (strain WCH70).